Here is a 385-residue protein sequence, read N- to C-terminus: MIRFTTAGESHGEGLFVIIEGIPAGLTINSEDIDLELARRQKGYGRGQRMCIETDTVKVFSGMRHTVSLGSPIAMYIANKDFKNWTKIMSPTSVDSEVTPLLRPRPGHADLPGFMKYGVNDFRDILERASARETAARVAAGAVCKALLKEFEISIVSYTSQIGDVTADISSVEECKIWHDAEISCVRCPDAKASEKMIQLIKKAGEKGDTLGGKVVVVTKNVPAGLGSHTQWDLKLDGRLAQSLISIQAVKAVEFGAGTKLASLLGALSHDEIFYDVTRGFYRDTNRAGGIEGGMSNGEPIVVTCTMKAIPSLANPLHSVNLATKETAEAEAIRSDVCAVPAVGIVAEAAIAVELAKALKEKFGGDSLKDMKKNVNIYKERIKAL.

Residues R40 and R46 each contribute to the NADP(+) site. Residues 128-130 (RAS), 248-249 (QA), G293, 308-312 (KAIPS), and R334 contribute to the FMN site.

This sequence belongs to the chorismate synthase family. As to quaternary structure, homotetramer. It depends on FMNH2 as a cofactor.

The enzyme catalyses 5-O-(1-carboxyvinyl)-3-phosphoshikimate = chorismate + phosphate. The protein operates within metabolic intermediate biosynthesis; chorismate biosynthesis; chorismate from D-erythrose 4-phosphate and phosphoenolpyruvate: step 7/7. Functionally, catalyzes the anti-1,4-elimination of the C-3 phosphate and the C-6 proR hydrogen from 5-enolpyruvylshikimate-3-phosphate (EPSP) to yield chorismate, which is the branch point compound that serves as the starting substrate for the three terminal pathways of aromatic amino acid biosynthesis. This reaction introduces a second double bond into the aromatic ring system. In Endomicrobium trichonymphae, this protein is Chorismate synthase.